Reading from the N-terminus, the 148-residue chain is C-C motif chemokine 2 (148 aa).

Positions 1–23 (MQVPVMLLGLLFTVAGWSIHVLA) are cleaved as a signal peptide. Gln-24 bears the Pyrrolidone carboxylic acid mark. Intrachain disulfides connect Cys-34–Cys-59 and Cys-35–Cys-75. N-linked (GlcNAc...) asparagine glycosylation is present at Asn-126.

Belongs to the intercrine beta (chemokine CC) family. In terms of assembly, monomer or homodimer; in equilibrium. Is tethered on endothelial cells by glycosaminoglycan (GAG) side chains of proteoglycans. Interacts with TNFAIP6 (via Link domain). In terms of processing, processing at the N-terminus can regulate receptor and target cell selectivity. Deletion of the N-terminal residue converts it from an activator of basophil to an eosinophil chemoattractant. N-Glycosylated.

It localises to the secreted. Its function is as follows. Acts as a ligand for C-C chemokine receptor CCR2. Signals through binding and activation of CCR2 and induces a strong chemotactic response and mobilization of intracellular calcium ions. Exhibits a chemotactic activity for monocytes and basophils but not neutrophils or eosinophils. Plays an important role in mediating peripheral nerve injury-induced neuropathic pain. Increases NMDA-mediated synaptic transmission in both dopamine D1 and D2 receptor-containing neurons, which may be caused by MAPK/ERK-dependent phosphorylation of GRIN2B/NMDAR2B. In Mus musculus (Mouse), this protein is C-C motif chemokine 2 (Ccl2).